The sequence spans 652 residues: Carboxypeptidase Z (652 aa).

A signal peptide spans 1–20; the sequence is MPTTPLLLAALAALAALAVA. The 123-residue stretch at 41-163 folds into the FZ domain; the sequence is THSATCVDLH…APEEEGCYDP (123 aa). Disulfide bonds link C46–C112, C54–C105, C96–C132, C121–C160, and C125–C149. Residue N60 is glycosylated (N-linked (GlcNAc...) asparagine). The Peptidase M14 domain occupies 189 to 505; that stretch reads AHHSYAQMVR…EPLLNFLEMV (317 aa). Zn(2+) is bound by residues H251 and E254. Residue N284 is glycosylated (N-linked (GlcNAc...) asparagine). H383 contributes to the Zn(2+) binding site. The active-site Proton donor/acceptor is E475. The disordered stretch occupies residues 594-628; it reads FLPGPSRALPRSLDPQGAPAQLDFEPPRARRQPAS.

The protein belongs to the peptidase M14 family. It depends on Zn(2+) as a cofactor. In terms of tissue distribution, abundantly expressed in the placenta, with low to moderate levels in the brain, lung, thymus and kidney.

The protein resides in the secreted. The protein localises to the extracellular space. Its subcellular location is the extracellular matrix. With respect to regulation, inhibited by 2-mercaptomethyl-3-guanidinoethylthiopropanoic acid (MGTA) and guanidinoethylmercaptosuccinic acid (GEMSA). Inhibited by chelating agents such as EDTA and EGTA. Cleaves substrates with C-terminal arginine residues. Probably modulates the Wnt signaling pathway, by cleaving some undefined protein. May play a role in cleavage during prohormone processing. In Rattus norvegicus (Rat), this protein is Carboxypeptidase Z (Cpz).